The sequence spans 108 residues: MFSTRGVLLLLSLMAAVAAFGLFSRPAPITRDTIRPPRAKHGSLKLCPPGGASFLDAFNLICPMRRRRRSVSENYNDGGGSLLGRTMNMCCETGCEFTDIFAICNPFG.

An N-terminal signal peptide occupies residues 1 to 19 (MFSTRGVLLLLSLMAAVAA).

The protein belongs to the insulin family. In terms of tissue distribution, expressed in head neurons and the uterus.

The protein resides in the secreted. Involved in the regulation of the larval diapause. The chain is Insulin-like peptide 17 from Caenorhabditis elegans.